A 257-amino-acid polypeptide reads, in one-letter code: Snake venom serine protease KN3 (257 aa).

Residues 1-18 form the signal peptide; that stretch reads MVLIRVLANLLILQLSYA. Residues 19 to 24 constitute a propeptide that is removed on maturation; it reads QKSSKL. The region spanning 25–248 is the Peptidase S1 domain; it reads VVGGDECNIN…HLDWIKSIIA (224 aa). Disulfide bonds link C31–C162, C49–C65, C97–C255, C141–C209, C173–C188, and C199–C224. Catalysis depends on charge relay system residues H64 and D109. N-linked (GlcNAc...) asparagine glycosylation is found at N120, N121, and N164. The Charge relay system role is filled by S203.

The protein belongs to the peptidase S1 family. Snake venom subfamily. In terms of assembly, monomer. As to expression, expressed by the venom gland.

The protein localises to the secreted. Its function is as follows. Snake venom serine protease that may act in the hemostasis system of the prey. This Trimeresurus stejnegeri (Chinese green tree viper) protein is Snake venom serine protease KN3.